The sequence spans 168 residues: Pleiotrophin (168 aa).

Positions 1–32 (MQTPQFLQQRRKFAAAFLAFIFLLAVVDTAEA) are cleaved as a signal peptide. 5 disulfides stabilise this stretch: C47–C76, C55–C85, C62–C89, C99–C131, and C109–C141. Chondroitin sulfate binding stretches follow at residues 92–99 (KKQFGAEC) and 123–131 (KRALHNADC). The segment at 139-168 (KPCGKVTKPKPQAESKKKKKEGKKQEKMLD) is disordered. Positions 147 to 168 (PKPQAESKKKKKEGKKQEKMLD) are chondroitin sulfate A binding.

This sequence belongs to the pleiotrophin family. In terms of assembly, interacts with ALK and NEK6. Interacts with PTPRZ1 (via chondroitin sulfate groups); promotes formation of homooligomers; oligomerization impairs tyrosine phosphatase activity. Forms a complex with PTPRZ1 and CTNNB1; this complex inactivates PTPRZ1 protein tyrosine phosphatase activity through PTN interaction and stimulates tyrosine phosphorylation of CTNNB1. Interacts with ITGB3 and ITGA5. Forms a complex with PTPRZ1 and integrin alpha-V/beta-3 (ITGAV:ITGB3) that stimulates endothelial cell migration through ITGB3 'Tyr-773' phosphorylation. Interacts with SDC3 (via heparan sulfate chains); this interaction mediates the neurite outgrowth-promoting signal from PTN to the cytoskeleton of growing neurites; this interaction mediates osteoblast recruitment. Interacts with GPC2 (via heparan sulfate); this interaction promotes neurite outgrowth through binding of PTN with chondroitin sulfate of proteoglycans, thereby releasing PTPRS of chondroitin sulfate proteoglycans (CSPGs) and leading to binding with heparan sulfate of GPC2. Post-translationally, phosphorylated by NEK6.

The protein resides in the secreted. In terms of biological role, secreted growth factor that mediates its signal through cell-surface proteoglycan and non-proteoglycan receptors. Binds cell-surface proteoglycan receptor via their chondroitin sulfate (CS) groups. Thereby regulates many processes like cell proliferation, cell survival, cell growth, cell differentiation and cell migration in several tissues namely neuron and bone. Also plays a role in synaptic plasticity and learning-related behavior by inhibiting long-term synaptic potentiation. Binds PTPRZ1, leading to neutralization of the negative charges of the CS chains of PTPRZ1, inducing PTPRZ1 clustering, thereby causing the dimerization and inactivation of its phosphatase activity leading to increased tyrosine phosphorylation of each of the PTPRZ1 substrates like ALK, CTNNB1 or AFAP1L2 in order to activate the PI3K-AKT pathway. Through PTPRZ1 binding controls oligodendrocyte precursor cell differentiation by enhancing the phosphorylation of AFAP1L2 in order to activate the PI3K-AKT pathway. Forms a complex with PTPRZ1 and integrin alpha-V/beta-3 (ITGAV:ITGB3) that stimulates endothelial cell migration through SRC dephosphorylation and activation that consequently leads to ITGB3 'Tyr-773' phosphorylation. In adult hippocampus promotes dendritic arborization, spine development, and functional integration and connectivity of newborn granule neurons through ALK by activating AKT signaling pathway. Binds GPC2 and chondroitin sulfate proteoglycans (CSPGs) at the neuron surface, leading to abrogation of binding between PTPRS and CSPGs and neurite outgrowth promotion. Binds SDC3 and mediates bone formation by recruiting and attaching osteoblasts/osteoblast precursors to the sites for new bone deposition. Binds ALK and promotes cell survival and cell proliferation through MAPK pathway activation. Inhibits proliferation and enhances differentiation of neural stem cells by inhibiting FGF2-induced fibroblast growth factor receptor signaling pathway. Mediates regulatory mechanisms in normal hemostasis and in hematopoietic regeneration and in maintaining the balance of myeloid and lymphoid regeneration. In addition may play a role in the female reproductive system, auditory response and the progesterone-induced decidualization pathway. The protein is Pleiotrophin of Sus scrofa (Pig).